We begin with the raw amino-acid sequence, 729 residues long: Neurochondrin (729 aa).

N-acetylserine is present on Ser2. At Ser2 the chain carries Phosphoserine. Ser2 is subject to N-acetylalanine. 2 S-palmitoyl cysteine lipidation sites follow: Cys3 and Cys4. Arg75 is modified (asymmetric dimethylarginine). Position 448 is a phosphoserine (Ser448).

The protein belongs to the neurochondrin family. In terms of assembly, interacts with MCHR1. Interacts with SEMA4C. Interacts with DIAPH1 (via FH3 domain). Interacts with GRM5. Post-translationally, palmitoylated. Palmitoylation by ZDHHC1, ZDHHC3 and ZDHHC11 regulates the association of NCDN with endosome membranes. May also be palmitoylated by ZDHHC7. As to expression, abundantly expressed in whole adult brain and in all individual brain regions examined, including spinal cord. Weakly expressed in ovary, testis, fetal brain and small intestine.

The protein localises to the cytoplasm. It is found in the cytosol. It localises to the endosome membrane. Its subcellular location is the cell projection. The protein resides in the dendrite. The protein localises to the postsynapse. Functionally, probably involved in signal transduction in the nervous system, via increasing cell surface localization of GRM5/mGluR5 and positively regulating its signaling. Required for the spatial learning process. Acts as a negative regulator of Ca(2+)-calmodulin-dependent protein kinase 2 (CaMK2) phosphorylation. May play a role in modulating melanin-concentrating hormone-mediated functions via its interaction with MCHR1 that interferes with G protein-coupled signal transduction. May be involved in bone metabolism. May also be involved in neurite outgrowth. This is Neurochondrin from Homo sapiens (Human).